The following is a 118-amino-acid chain: Small ribosomal subunit protein uS13 (118 aa).

The interval 94-118 is disordered; that stretch reads GLPVRGQRTKTNARTRKGPRKPIRK.

It belongs to the universal ribosomal protein uS13 family. Part of the 30S ribosomal subunit. Forms a loose heterodimer with protein S19. Forms two bridges to the 50S subunit in the 70S ribosome.

Functionally, located at the top of the head of the 30S subunit, it contacts several helices of the 16S rRNA. In the 70S ribosome it contacts the 23S rRNA (bridge B1a) and protein L5 of the 50S subunit (bridge B1b), connecting the 2 subunits; these bridges are implicated in subunit movement. Contacts the tRNAs in the A and P-sites. This is Small ribosomal subunit protein uS13 from Marinobacter nauticus (strain ATCC 700491 / DSM 11845 / VT8) (Marinobacter aquaeolei).